Reading from the N-terminus, the 241-residue chain is Triosephosphate isomerase (241 aa).

9-11 (NWK) serves as a coordination point for substrate. H96 functions as the Electrophile in the catalytic mechanism. Residue E165 is the Proton acceptor of the active site. Substrate-binding positions include G171, S204, and 225-226 (GG).

It belongs to the triosephosphate isomerase family. As to quaternary structure, homodimer.

The protein resides in the cytoplasm. The catalysed reaction is D-glyceraldehyde 3-phosphate = dihydroxyacetone phosphate. The protein operates within carbohydrate biosynthesis; gluconeogenesis. It participates in carbohydrate degradation; glycolysis; D-glyceraldehyde 3-phosphate from glycerone phosphate: step 1/1. Its function is as follows. Involved in the gluconeogenesis. Catalyzes stereospecifically the conversion of dihydroxyacetone phosphate (DHAP) to D-glyceraldehyde-3-phosphate (G3P). The protein is Triosephosphate isomerase of Prochlorococcus marinus (strain MIT 9515).